The following is a 301-amino-acid chain: uncharacterized protein (301 aa).

Positions 1-28 (MFFREDKSVAFRLRSAALSGCATGQSDA) are cleaved as a signal peptide.

This is an uncharacterized protein from Treponema pallidum (strain Nichols).